We begin with the raw amino-acid sequence, 734 residues long: Adhesion G protein-coupled receptor E5 (734 aa).

The N-terminal stretch at 1–26 (MGGPHGGPFLLFHVLCFLLTLSEVGS) is a signal peptide. Residues 27 to 449 (QNSKACALPC…VEDPKLALIT (423 aa)) lie on the Extracellular side of the membrane. In terms of domain architecture, EGF-like 1 spans 28-70 (NSKACALPCPPNSSCVNGTACRCAPGFISFSGEIFTDPLESCD). 9 disulfides stabilise this stretch: cysteine 32/cysteine 42, cysteine 36/cysteine 48, cysteine 50/cysteine 69, cysteine 75/cysteine 89, cysteine 83/cysteine 98, cysteine 100/cysteine 121, cysteine 127/cysteine 140, cysteine 134/cysteine 149, and cysteine 151/cysteine 170. 2 N-linked (GlcNAc...) asparagine glycosylation sites follow: asparagine 39 and asparagine 44. Residues 71-122 (DINECGPPSPVDCGSSADCQNTEGGYYCTCSPGYEPVSGAMIFRNESENTCR) form the EGF-like 2; calcium-binding domain. N-linked (GlcNAc...) asparagine glycans are attached at residues asparagine 115 and asparagine 136. The region spanning 123-171 (DVDECSSGQHQCHNSTVCFNTVGSYTCHCREGWEPKHGLKNKQKDTICK) is the EGF-like 3; calcium-binding domain. The GAIN-B domain maps to 265–441 (TYRSLDNTEL…AILMAHYDVE (177 aa)). Asparagine 285, asparagine 327, asparagine 372, asparagine 403, and asparagine 418 each carry an N-linked (GlcNAc...) asparagine glycan. 2 disulfides stabilise this stretch: cysteine 393-cysteine 423 and cysteine 411-cysteine 425. The interval 393–441 (CAFWKKDSNGNGSWATTGCWKMGRGNGSITCQCSHLSSFAILMAHYDVE) is GPS. Residues 450–470 (KVGLALSLACLLLCILTFLLV) form a helical membrane-spanning segment. At 471–478 (RPIQGSRT) the chain is on the cytoplasmic side. Residues 479 to 499 (TVHLHLCICLFVGSAIFLAGI) form a helical membrane-spanning segment. At 500–519 (ENEGGEVGTRCRLVAVLLHY) the chain is on the extracellular side. Residues 520 to 540 (CFLAAFCWMSLEGVELYFLVV) form a helical membrane-spanning segment. Over 541-550 (RVFQGQGMRK) the chain is Cytoplasmic. The chain crosses the membrane as a helical span at residues 551 to 571 (LWLCLIGYGVPLIIVGISAGA). Topologically, residues 572–593 (YSKGYGREKFCWLNFEGGFLWS) are extracellular. Residues 594–614 (FVGPVTFIVLGNAIIFVITVW) traverse the membrane as a helical segment. The Cytoplasmic segment spans residues 615–637 (KLTQKFSEINPDIKKLKKARVLT). Residues 638–658 (ITAIAQLFVLGCTWVFGLLLF) form a helical membrane-spanning segment. At 659–662 (NPES) the chain is on the extracellular side. Residues 663-683 (WVLSYIFSILNCLQGFFLFVL) traverse the membrane as a helical segment. Over 684–734 (YCLLNKKVREEYRKWACMVAGNKYSEFATTTSGSGSSHNQTQALRPSESGM) the chain is Cytoplasmic. Positions 712-734 (TTTSGSGSSHNQTQALRPSESGM) are disordered. Phosphothreonine is present on threonine 713. Serine 715 carries the post-translational modification Phosphoserine. A Phosphothreonine modification is found at threonine 724. Serine 730 and serine 732 each carry phosphoserine.

It belongs to the G-protein coupled receptor 2 family. LN-TM7 subfamily. Forms a heterodimer, consisting of a large extracellular region (alpha subunit) non-covalently linked to a seven-transmembrane moiety (beta subunit). Interacts with complement decay-accelerating factor (DAF) and with chondroitin sulfate. In terms of processing, proteolytically cleaved into 2 subunits, an extracellular alpha subunit and a seven-transmembrane subunit.

Its subcellular location is the cell membrane. It is found in the secreted. The protein resides in the extracellular space. In terms of biological role, receptor potentially involved in both adhesion and signaling processes early after leukocyte activation. Plays an essential role in leukocyte migration. The chain is Adhesion G protein-coupled receptor E5 from Bos taurus (Bovine).